The chain runs to 426 residues: Testicular acid phosphatase (426 aa).

Positions 1–26 (MAGLGFWGHPAGPLLLLLLLVLPPRA) are cleaved as a signal peptide. Residues 27–393 (LPEGPLVFVA…AAIPPAPVVP (367 aa)) lie on the Extracellular side of the membrane. The active-site Nucleophile is H41. 3 cysteine pairs are disulfide-bonded: C159–C378, C214–C312, and C353–C357. N191 and N269 each carry an N-linked (GlcNAc...) asparagine glycan. The active-site Proton donor is the D289. N-linked (GlcNAc...) asparagine glycosylation is found at N330 and N339. Residues 394-414 (LLAGAVAVLVALSLGLGLLAW) traverse the membrane as a helical segment. Residues 415–426 (RPGCLRALGGPV) are Cytoplasmic-facing.

This sequence belongs to the histidine acid phosphatase family. As to quaternary structure, homodimer. In terms of processing, glycosylated. Expressed mainly in the testis. Also expressed in the brain where they are enriched at the postsynaptic sites. Expressed at lower levels in the trachea, prostate, bone marrow, spinal cord, colon, fetal brain, heart, thymus, fetal liver, spleen, leukocytes, ovary, small intestine, pancreas and skeletal muscle. Expression is significantly lower in testicular cancer tissues than in normal testicular tissues. Isoform 3 is expressed in the testis, trachea, prostate and bone marrow.

The protein localises to the membrane. The enzyme catalyses a phosphate monoester + H2O = an alcohol + phosphate. Functionally, may dephosphorylate receptor tyrosine-protein kinase ERBB4 and inhibits its ligand-induced proteolytic cleavage. May play a role in odontogenesis. This is Testicular acid phosphatase from Homo sapiens (Human).